A 1108-amino-acid polypeptide reads, in one-letter code: Retinal guanylyl cyclase 2 (1108 aa).

The signal sequence occupies residues 1–50 (MFLGLGRFSRLVLWFAAFRKLLGHHGLASAKFLWCLCLLSVMSLPQQVWT). Over 51–467 (LPYKIGVVGP…KICHGGIDPA (417 aa)) the chain is Extracellular. Residues Cys104 and Cys132 are joined by a disulfide bond. A helical transmembrane segment spans residues 468-490 (FAMMVCLTLLIALLSINGFAYFI). The Cytoplasmic portion of the chain corresponds to 491-1108 (RRRINKIQLI…AERQLVRNKP (618 aa)). One can recognise a Protein kinase domain in the interval 532–812 (FQITSEVQSG…DEIFNQFKTF (281 aa)). One can recognise a Guanylate cyclase domain in the interval 884-1014 (TLYFSDIVGF…DTVNTASRME (131 aa)).

Belongs to the adenylyl cyclase class-4/guanylyl cyclase family. In terms of assembly, homodimer. Interacts with RD3; promotes the exit of GUCY2F from the endoplasmic reticulum and its trafficking to the photoreceptor outer segments. Post-translationally, there are 9 conserved cysteine residues in sensory guanylate cyclases, 6 in the extracellular domain, which may be involved in intra- or interchain disulfide bonds. As to expression, retina. Localized exclusively in the outer nuclear layer and inner segments of the rod and cone photoreceptor cells.

Its subcellular location is the photoreceptor outer segment membrane. It carries out the reaction GTP = 3',5'-cyclic GMP + diphosphate. With respect to regulation, activated by GUCA1B when free calcium ions concentration is low, and inhibited by GUCA1B when free calcium ions concentration is high. Inhibited by RD3. In terms of biological role, responsible for the synthesis of cyclic GMP (cGMP) in rods and cones of photoreceptors. Plays an essential role in phototransduction, by mediating cGMP replenishment. May also participate in the trafficking of membrane-asociated proteins to the photoreceptor outer segment membrane. This is Retinal guanylyl cyclase 2 (GUCY2F) from Homo sapiens (Human).